The primary structure comprises 226 residues: Phosphoribosylformylglycinamidine synthase subunit PurQ (226 aa).

Positions 3 to 225 (FAVIVFPGSN…VKWGARHVTY (223 aa)) constitute a Glutamine amidotransferase type-1 domain. Cysteine 86 functions as the Nucleophile in the catalytic mechanism. Residues histidine 194 and glutamate 196 contribute to the active site.

Part of the FGAM synthase complex composed of 1 PurL, 1 PurQ and 2 PurS subunits.

The protein localises to the cytoplasm. The catalysed reaction is N(2)-formyl-N(1)-(5-phospho-beta-D-ribosyl)glycinamide + L-glutamine + ATP + H2O = 2-formamido-N(1)-(5-O-phospho-beta-D-ribosyl)acetamidine + L-glutamate + ADP + phosphate + H(+). It catalyses the reaction L-glutamine + H2O = L-glutamate + NH4(+). It functions in the pathway purine metabolism; IMP biosynthesis via de novo pathway; 5-amino-1-(5-phospho-D-ribosyl)imidazole from N(2)-formyl-N(1)-(5-phospho-D-ribosyl)glycinamide: step 1/2. Functionally, part of the phosphoribosylformylglycinamidine synthase complex involved in the purines biosynthetic pathway. Catalyzes the ATP-dependent conversion of formylglycinamide ribonucleotide (FGAR) and glutamine to yield formylglycinamidine ribonucleotide (FGAM) and glutamate. The FGAM synthase complex is composed of three subunits. PurQ produces an ammonia molecule by converting glutamine to glutamate. PurL transfers the ammonia molecule to FGAR to form FGAM in an ATP-dependent manner. PurS interacts with PurQ and PurL and is thought to assist in the transfer of the ammonia molecule from PurQ to PurL. This Exiguobacterium sp. (strain ATCC BAA-1283 / AT1b) protein is Phosphoribosylformylglycinamidine synthase subunit PurQ.